The chain runs to 1850 residues: Voltage-dependent L-type calcium channel subunit alpha-1S (1850 aa).

The tract at residues 1–23 is disordered; it reads MEPSSPQDEGLRKKQPKKPVPEI. Topologically, residues 1 to 51 are cytoplasmic; the sequence is MEPSSPQDEGLRKKQPKKPVPEILPRPPRALFCLTLQNPLRKACISVVEWK. An I repeat occupies 38–337; it reads NPLRKACISV…LVLGVLSGEF (300 aa). Residues 52-70 form a helical membrane-spanning segment; sequence PFETIILLTIFANCVALAV. Over 71–85 the chain is Extracellular; it reads YLPMPEDDNNTLNLG. A helical transmembrane segment spans residues 86 to 106; it reads LEKLEYFFLIVFSIEAAMKII. Residues 107-115 are Cytoplasmic-facing; that stretch reads AYGFLFHQD. A helical membrane pass occupies residues 116–136; that stretch reads AYLRSGWNVLDFIIVFLGVFT. Residues 137 to 160 lie on the Extracellular side of the membrane; the sequence is AILEQVNIIQTNTAPMSSKGAGLD. The chain crosses the membrane as a helical span at residues 161-179; sequence VKALRAFRVLRPLRLVSGV. Residues 180–196 lie on the Cytoplasmic side of the membrane; that stretch reads PSLQVVLNSIFKAMLPL. A helical transmembrane segment spans residues 197–218; the sequence is FHIALLVLFMVIIYAIIGLELF. Residues 219–279 are Extracellular-facing; it reads KGKMHKTCYF…HGITHFDNFG (61 aa). Disulfide bonds link Cys226/Cys254 and Cys245/Cys261. Residues 280–301 constitute an intramembrane region (pore-forming); it reads FSMLTVYQCISMEGWTDVLYWV. Residues 290–293 carry the Selectivity filter of repeat I motif; sequence SMEG. Glu292 contacts Ca(2+). The Extracellular segment spans residues 302–309; that stretch reads NDAIGNEW. The chain crosses the membrane as a helical span at residues 310 to 330; that stretch reads PWIYFVTLILLGSFFILNLVL. Residues 331-432 are Cytoplasmic-facing; that stretch reads GVLSGEFTKE…WKCHDLVKSK (102 aa). The tract at residues 357–374 is binding to the beta subunit; it reads QQLEEDLRGYMSWITQGE. Ser393 and Ser397 each carry phosphoserine. Residues 418–664 form an II repeat; sequence NRVFRWKCHD…VFLAIAVDNL (247 aa). The helical transmembrane segment at 433–451 threads the bilayer; that stretch reads VFYWLVILIVALNTLSIAS. Topologically, residues 452 to 462 are extracellular; the sequence is EHHNQPLWLTH. A helical transmembrane segment spans residues 463–483; sequence LQDVANRVLLALFTIEMLMKM. At 484-494 the chain is on the cytoplasmic side; sequence YGLGLRQYFMS. Residues 495–514 traverse the membrane as a helical segment; it reads IFNRFDCFVVCSGILEILLV. Residues 515–523 are Extracellular-facing; that stretch reads ESGAMTPLG. Residues 524–542 form a helical membrane-spanning segment; the sequence is ISVLRCIRLLRLFKITKYW. Residues 543-561 are Cytoplasmic-facing; it reads TSLSNLVASLLNSIRSIAS. Residues 562 to 581 form a helical membrane-spanning segment; it reads LLLLLFLFMIIFALLGMQLF. Residues 582-601 lie on the Extracellular side of the membrane; sequence GGRYDFEDTEVRRSNFDNFP. Positions 602-623 form an intramembrane region, pore-forming; the sequence is QALISVFQVLTGEDWNSVMYNG. Positions 612–615 match the Selectivity filter of repeat II motif; that stretch reads TGED. A Ca(2+)-binding site is contributed by Glu614. At 624–633 the chain is on the extracellular side; that stretch reads IMAYGGPSYP. The chain crosses the membrane as a helical span at residues 634–653; that stretch reads GVLVCIYFIILFVCGNYILL. Over 654 to 799 the chain is Cytoplasmic; that stretch reads NVFLAIAVDN…VLCHRIVNAT (146 aa). Disordered regions lie at residues 673–717 and 731–758; these read AQKA…IPTT and EVKDPYPSADFPGDDEEDEPEIPASPRP. Ser687 carries the post-translational modification Phosphoserine; by PKA. Positions 690–711 are enriched in basic and acidic residues; sequence LPDKSEEERSTMTKKLEQKPKG. Residues 742–751 show a composition bias toward acidic residues; that stretch reads PGDDEEDEPE. The III repeat unit spans residues 786–1068; it reads NKIRVLCHRI…IFVGFVIVTF (283 aa). Residues 800 to 818 traverse the membrane as a helical segment; that stretch reads WFTNFILLFILLSSAALAA. The Extracellular portion of the chain corresponds to 819 to 830; sequence EDPIRADSMRNQ. A helical transmembrane segment spans residues 831–850; the sequence is ILEYFDYVFTAVFTVEIVLK. The Cytoplasmic segment spans residues 851-866; sequence MTTYGAFLHKGSFCRN. The chain crosses the membrane as a helical span at residues 867–885; it reads YFNILDLLVVAVSLISMGL. At 886–892 the chain is on the extracellular side; it reads ESSAISV. The chain crosses the membrane as a helical span at residues 893–911; the sequence is VKILRVLRVLRPLRAINRA. Over 912–930 the chain is Cytoplasmic; sequence KGLKHVVQCVFVAIRTIGN. The helical transmembrane segment at 931-950 threads the bilayer; the sequence is IVLVTTLLQFMFACIGVQLF. At 951–1000 the chain is on the extracellular side; it reads KGKFYSCNDLSKMTEEECRGYYYIYKDGDPTQIELRPRQWIHNDFHFDNV. A disulfide bridge links Cys957 with Cys968. The interval 988–1077 is dihydropyridine binding; that stretch reads RQWIHNDFHF…FQEQGETEYK (90 aa). An intramembrane region (pore-forming) is located at residues 1001 to 1021; the sequence is LSAMMSLFTVSTFEGWPQLLY. A Selectivity filter of repeat III motif is present at residues 1012–1015; the sequence is TFEG. Ca(2+) is bound at residue Glu1014. Residues 1022–1038 lie on the Extracellular side of the membrane; that stretch reads KAIDSNEEDTGPVYNNR. A helical transmembrane segment spans residues 1039–1060; that stretch reads VEMAIFFIIYIILIAFFMMNIF. Residues 1061–1118 are Cytoplasmic-facing; the sequence is VGFVIVTFQEQGETEYKNCELDKNQRQCVQYALKARPLRCYIPKNPYQYQVWYVVTSS. The IV repeat unit spans residues 1105–1384; that stretch reads NPYQYQVWYV…LFVAVIMDNF (280 aa). Residues 1119–1140 traverse the membrane as a helical segment; sequence YFEYLMFALIMLNTICLGMQHY. N-linked (GlcNAc...) asparagine glycosylation occurs at Asn1141. Residues 1141–1148 are Extracellular-facing; that stretch reads NQSEQMNH. Residues 1149–1170 traverse the membrane as a helical segment; that stretch reads ISDILNVAFTIIFTLEMILKLI. Over 1171 to 1180 the chain is Cytoplasmic; sequence AFKPRGYFGD. The chain crosses the membrane as a helical span at residues 1181 to 1200; the sequence is PWNVFDFLIVIGSIIDVILS. The Extracellular segment spans residues 1201 to 1231; sequence EIDTLLASSGGLYCLGGGCGNVDPDESARIS. The chain crosses the membrane as a helical span at residues 1232 to 1250; that stretch reads SAFFRLFRVMRLIKLLSRA. At 1251 to 1268 the chain is on the cytoplasmic side; that stretch reads EGVRTLLWTFIKSFQALP. Residues 1269–1289 form a helical membrane-spanning segment; sequence YVALLIVMLFFIYAVIGMQMF. The Extracellular portion of the chain corresponds to 1290–1311; it reads GKIAMVDGTQINRNNNFQTFPQ. Residues 1312-1330 constitute an intramembrane region (pore-forming); it reads AVLLLFRCATGEAWQEILL. Residues 1321–1324 carry the Selectivity filter of repeat IV motif; it reads TGEA. Residues 1331 to 1356 lie on the Extracellular side of the membrane; that stretch reads ACSYGKRCDPESDYAPGEEYACGTNF. The dihydropyridine binding stretch occupies residues 1337 to 1403; sequence RCDPESDYAP…LGPHHLDEFK (67 aa). Residues Cys1338 and Cys1352 are joined by a disulfide bond. The interval 1349–1391 is phenylalkylamine binding; sequence EYACGTNFAYYYFISFYMLCAFLIINLFVAVIMDNFDYLTRDW. The helical transmembrane segment at 1357-1381 threads the bilayer; it reads AYYYFISFYMLCAFLIINLFVAVIM. Residues 1382–1850 are Cytoplasmic-facing; it reads DNFDYLTRDW…PKGGAMPREP (469 aa). Positions 1522–1542 are interaction with calmodulin; it reads KFYATFLIQEHFRKFMKRQEE. At Ser1575 the chain carries Phosphoserine; by PKA and CAMK2. The residue at position 1579 (Thr1579) is a Phosphothreonine. Ser1617 carries the phosphoserine; by PKA modification. The disordered stretch occupies residues 1697–1779; sequence PVTREGPFSQ…FEERVPRNSA (83 aa). Positions 1706–1716 are enriched in polar residues; that stretch reads QPCSVSGVNSR. Basic and acidic residues-rich tracts occupy residues 1717-1726 and 1745-1756; these read SHVDKLERQM and QEKHPVHEEGKG.

The protein belongs to the calcium channel alpha-1 subunit (TC 1.A.1.11) family. CACNA1S subfamily. In terms of assembly, component of a calcium channel complex consisting of a pore-forming alpha subunit (CACNA1S) and the ancillary subunits CACNB1 or CACNB2, CACNG1 and CACNA2D1. The channel complex contains alpha, beta, gamma and delta subunits in a 1:1:1:1 ratio, i.e. it contains either CACNB1 or CACNB2. CACNA1S channel activity is modulated by the auxiliary subunits (CACNB1 or CACNB2, CACNG1 and CACNA2D1). Interacts with DYSF and JSRP1. Interacts with RYR1. Interacts with STAC, STAC2 and STAC3 (via their SH3 domains). Interacts with CALM. The alpha-1S subunit is found in two isoforms in the skeletal muscle: a minor form of 212 kDa containing the complete amino acid sequence, and a major form of 190 kDa derived from the full-length form by post-translational proteolysis close to Phe-1690. In terms of processing, phosphorylated. Phosphorylation by PKA activates the calcium channel. Both the minor and major forms are phosphorylated in vitro by PKA. Phosphorylation at Ser-1575 is involved in beta-adrenergic-mediated regulation of the channel. As to expression, skeletal muscle specific.

The protein localises to the cell membrane. It localises to the sarcolemma. It is found in the T-tubule. It catalyses the reaction Ca(2+)(in) = Ca(2+)(out). Its activity is regulated as follows. Channel activity is blocked by dihydropyridines (DHP), phenylalkylamines, and by benzothiazepines. Functionally, pore-forming, alpha-1S subunit of the voltage-gated calcium channel that gives rise to L-type calcium currents in skeletal muscle. Calcium channels containing the alpha-1S subunit play an important role in excitation-contraction coupling in skeletal muscle via their interaction with RYR1, which triggers Ca(2+) release from the sarcplasmic reticulum and ultimately results in muscle contraction. Long-lasting (L-type) calcium channels belong to the 'high-voltage activated' (HVA) group. This chain is Voltage-dependent L-type calcium channel subunit alpha-1S (Cacna1s), found in Rattus norvegicus (Rat).